The primary structure comprises 305 residues: tRNA dimethylallyltransferase (305 aa).

ATP is bound at residue 11 to 18 (GPTAVGKT). Residue 13–18 (TAVGKT) coordinates substrate. The segment at 36-39 (DSMQ) is interaction with substrate tRNA.

It belongs to the IPP transferase family. Monomer. Mg(2+) is required as a cofactor.

It catalyses the reaction adenosine(37) in tRNA + dimethylallyl diphosphate = N(6)-dimethylallyladenosine(37) in tRNA + diphosphate. In terms of biological role, catalyzes the transfer of a dimethylallyl group onto the adenine at position 37 in tRNAs that read codons beginning with uridine, leading to the formation of N6-(dimethylallyl)adenosine (i(6)A). The chain is tRNA dimethylallyltransferase from Listeria innocua serovar 6a (strain ATCC BAA-680 / CLIP 11262).